The following is a 100-amino-acid chain: MHLSPQEKDKLLIFSAALLAERRLDRGLKLNYPETIAFLSFQVLEGARDGKSVSQLMSEGTTWLTKSQVMEGIPEMVDEVQIEAVFPDGTKLVTIHNPIN.

It belongs to the urease gamma subunit family. As to quaternary structure, heterotrimer of UreA (gamma), UreB (beta) and UreC (alpha) subunits. Three heterotrimers associate to form the active enzyme.

The protein localises to the cytoplasm. The enzyme catalyses urea + 2 H2O + H(+) = hydrogencarbonate + 2 NH4(+). Its pathway is nitrogen metabolism; urea degradation; CO(2) and NH(3) from urea (urease route): step 1/1. The protein is Urease subunit gamma of Prochlorococcus marinus (strain MIT 9215).